The sequence spans 325 residues: Coiled-coil domain-containing protein 160 (325 aa).

Disordered regions lie at residues 18–45 and 81–123; these read SAQD…KGME and ENKR…CSTD. Over residues 81-91 the composition is skewed to basic and acidic residues; sequence ENKRNISKNET. Polar residues predominate over residues 92–123; the sequence is DTNSASYESSNVDVTTEESFNSTEDNSTCSTD. Residues 144-288 are a coiled coil; the sequence is KLCLNLLNEE…SVIKNELRTE (145 aa).

The protein belongs to the CCDC160 family.

The protein is Coiled-coil domain-containing protein 160 (CCDC160) of Homo sapiens (Human).